The primary structure comprises 1076 residues: Cytadherence high molecular weight protein 3 (1076 aa).

A fibronectin-binding region spans residues 264-284 (QGYDQGYDQQYDQQGYDQQGY). The segment covering 326 to 335 (QQPVEVAKPA) has biased composition (low complexity). The segment at 326–351 (QQPVEVAKPAPTKPVGPKPQPGKKAT) is disordered. Pro residues predominate over residues 336 to 345 (PTKPVGPKPQ). Residues 562-616 (EITKLEELVEIKTDNTESLNKLETLIDENKKIIDQFKQLKEEAKKSNSNINLEKV) adopt a coiled-coil conformation. Disordered stretches follow at residues 789-808 (SREHEQVQPKAQHQQPTTRI) and 850-873 (RINPQDSYYDQGYEQPDPYQEQQP). A compositionally biased stretch (polar residues) spans 797–806 (PKAQHQQPTT). The segment covering 862–873 (YEQPDPYQEQQP) has biased composition (low complexity).

It localises to the cell projection. The protein localises to the attachment organelle membrane. Its function is as follows. Binds immobilized fibronectin. Functionally, component of the cytoskeleton-like structure which stabilizes the shape of the wall-less mycoplasma. This cytoskeleton-like network of accessory proteins containing HMW proteins 1 to 5 allows the proper anchoring of cytadhesin proteins in the mycoplasmal membrane at the attachment organelle. Essential for successful surface parasitism. The polypeptide is Cytadherence high molecular weight protein 3 (hlp3) (Mycoplasmoides gallisepticum (strain R(low / passage 15 / clone 2)) (Mycoplasma gallisepticum)).